We begin with the raw amino-acid sequence, 545 residues long: CTP synthase (545 aa).

Residues 1-266 (MITNYIFVTG…DQYICDKFNL (266 aa)) are amidoligase domain. Position 14 (S14) interacts with CTP. S14 serves as a coordination point for UTP. Residues 15–20 (SLGKGI) and D72 contribute to the ATP site. The Mg(2+) site is built by D72 and E140. Residues 147–149 (DIE), 187–192 (KTKPTQ), and K223 each bind CTP. UTP contacts are provided by residues 187-192 (KTKPTQ) and K223. 239 to 241 (KDV) contributes to the ATP binding site. A Glutamine amidotransferase type-1 domain is found at 291–542 (SIGMVGKYIE…VKSALAHHQD (252 aa)). G352 lines the L-glutamine pocket. Residue C379 is the Nucleophile; for glutamine hydrolysis of the active site. Residues 380–383 (LGMQ), E403, and R470 each bind L-glutamine. Catalysis depends on residues H515 and E517.

This sequence belongs to the CTP synthase family. As to quaternary structure, homotetramer.

The catalysed reaction is UTP + L-glutamine + ATP + H2O = CTP + L-glutamate + ADP + phosphate + 2 H(+). The enzyme catalyses L-glutamine + H2O = L-glutamate + NH4(+). It carries out the reaction UTP + NH4(+) + ATP = CTP + ADP + phosphate + 2 H(+). It functions in the pathway pyrimidine metabolism; CTP biosynthesis via de novo pathway; CTP from UDP: step 2/2. With respect to regulation, allosterically activated by GTP, when glutamine is the substrate; GTP has no effect on the reaction when ammonia is the substrate. The allosteric effector GTP functions by stabilizing the protein conformation that binds the tetrahedral intermediate(s) formed during glutamine hydrolysis. Inhibited by the product CTP, via allosteric rather than competitive inhibition. Its function is as follows. Catalyzes the ATP-dependent amination of UTP to CTP with either L-glutamine or ammonia as the source of nitrogen. Regulates intracellular CTP levels through interactions with the four ribonucleotide triphosphates. In Hamiltonella defensa subsp. Acyrthosiphon pisum (strain 5AT), this protein is CTP synthase.